We begin with the raw amino-acid sequence, 37 residues long: Large ribosomal subunit protein bL36 (37 aa).

The protein belongs to the bacterial ribosomal protein bL36 family.

The chain is Large ribosomal subunit protein bL36 from Mycoplasmopsis synoviae (strain 53) (Mycoplasma synoviae).